We begin with the raw amino-acid sequence, 118 residues long: Large ribosomal subunit protein uL18 (118 aa).

This sequence belongs to the universal ribosomal protein uL18 family. Part of the 50S ribosomal subunit; part of the 5S rRNA/L5/L18/L25 subcomplex. Contacts the 5S and 23S rRNAs.

This is one of the proteins that bind and probably mediate the attachment of the 5S RNA into the large ribosomal subunit, where it forms part of the central protuberance. This is Large ribosomal subunit protein uL18 from Dechloromonas aromatica (strain RCB).